Reading from the N-terminus, the 607-residue chain is Protein PLASTID MOVEMENT IMPAIRED 2 (607 aa).

Coiled-coil stretches lie at residues 66–295 (KAKK…NAEL) and 329–445 (MLER…ESRR).

Belongs to the WEB family. As to quaternary structure, interacts with WEB1. In terms of tissue distribution, ubiquitous but preferentially in chloroplast-containing tissues.

The protein resides in the cytoplasm. Its function is as follows. Required for the chloroplast avoidance response under high intensity blue light. This avoidance response consists in the relocation of chloroplasts on the anticlinal side of exposed cells. Acts in association with WEB1 to maintain the velocity of chloroplast photorelocation movement via cp-actin filaments regulation. In Arabidopsis thaliana (Mouse-ear cress), this protein is Protein PLASTID MOVEMENT IMPAIRED 2 (PMI2).